The following is a 170-amino-acid chain: Fluoride-specific ion channel FluC 2 (170 aa).

The next 4 membrane-spanning stretches (helical) occupy residues 8–28 (ALVF…TVWI), 55–75 (IALL…VGMI), 84–104 (TFWG…AAAV), and 114–134 (ILIG…AAAM). Positions 92 and 95 each coordinate Na(+).

This sequence belongs to the fluoride channel Fluc/FEX (TC 1.A.43) family.

Its subcellular location is the cell membrane. The catalysed reaction is fluoride(in) = fluoride(out). Its activity is regulated as follows. Na(+) is not transported, but it plays an essential structural role and its presence is essential for fluoride channel function. Its function is as follows. Fluoride-specific ion channel. Important for reducing fluoride concentration in the cell, thus reducing its toxicity. This is Fluoride-specific ion channel FluC 2 from Corynebacterium jeikeium (strain K411).